A 188-amino-acid chain; its full sequence is Protein YOP1 (188 aa).

Over M1 to P35 the chain is Cytoplasmic. Residues K36–V55 form a helical membrane-spanning segment. The Lumenal segment spans residues G56–G57. A helical membrane pass occupies residues V58–A78. Residues I79 to T88 are Cytoplasmic-facing. Residues E89–F105 traverse the membrane as a helical segment. The Lumenal segment spans residues W106 to K108. The chain crosses the membrane as a helical span at residues A109–F127. Over I128–D188 the chain is Cytoplasmic. The interval I163–D188 is disordered. The span at A170 to D188 shows a compositional bias: low complexity.

This sequence belongs to the DP1 family. As to quaternary structure, oligomer.

It is found in the endoplasmic reticulum membrane. The protein localises to the golgi apparatus membrane. In terms of biological role, required to generate and maintain the structure of the tubular endoplasmic reticulum network and the vacuole. Induces high curvature in membranes and causes membrane tubule formation. Involved in membrane/vesicle trafficking. This Eremothecium gossypii (strain ATCC 10895 / CBS 109.51 / FGSC 9923 / NRRL Y-1056) (Yeast) protein is Protein YOP1 (YOP1).